The primary structure comprises 235 residues: Ubiquinone biosynthesis O-methyltransferase (235 aa).

4 residues coordinate S-adenosyl-L-methionine: Arg39, Gly59, Asp80, and Met124.

It belongs to the methyltransferase superfamily. UbiG/COQ3 family.

It carries out the reaction a 3-demethylubiquinol + S-adenosyl-L-methionine = a ubiquinol + S-adenosyl-L-homocysteine + H(+). It catalyses the reaction a 3-(all-trans-polyprenyl)benzene-1,2-diol + S-adenosyl-L-methionine = a 2-methoxy-6-(all-trans-polyprenyl)phenol + S-adenosyl-L-homocysteine + H(+). It functions in the pathway cofactor biosynthesis; ubiquinone biosynthesis. Functionally, O-methyltransferase that catalyzes the 2 O-methylation steps in the ubiquinone biosynthetic pathway. The polypeptide is Ubiquinone biosynthesis O-methyltransferase (Vibrio campbellii (strain ATCC BAA-1116)).